The sequence spans 898 residues: Interleukin enhancer-binding factor 3 (898 aa).

A DZF domain is found at 5 to 378 (RIFVNDDRHV…PMKRPMEEDG (374 aa)). The interval 52–85 (QEKGNSELSEAENMDTPPDDESKEGAGEQKAEHM) is disordered. Residues 60–73 (SEAENMDTPPDDES) are compositionally biased toward acidic residues. T67 is modified (phosphothreonine). Positions 74 to 85 (KEGAGEQKAEHM) are enriched in basic and acidic residues. Residue K100 is modified to N6-acetyllysine. T188 is modified (phosphothreonine; by PKR). At S190 the chain carries Phosphoserine. Residue K297 forms a Glycyl lysine isopeptide (Lys-Gly) (interchain with G-Cter in ubiquitin) linkage. The residue at position 315 (T315) is a Phosphothreonine; by PKR. Residue K348 forms a Glycyl lysine isopeptide (Lys-Gly) (interchain with G-Cter in SUMO1) linkage. Residues 363–402 (TTYAITPMKRPMEEDGEEKSPSKKKKKIQKKEEKADPPQA) form a disordered region. Positions 371 to 389 (KRPMEEDGEEKSPSKKKKK) match the Bipartite nuclear localization signal motif. The span at 372 to 383 (RPMEEDGEEKSP) shows a compositional bias: basic and acidic residues. A phosphoserine mark is found at S382 and S384. Residue K396 forms a Glycyl lysine isopeptide (Lys-Gly) (interchain with G-Cter in SUMO2) linkage. The region spanning 398–467 (DPPQAMNALM…AVKVLQDMGL (70 aa)) is the DRBM 1 domain. The residue at position 460 (K460) is an N6-acetyllysine. 2 disordered regions span residues 466-495 (GLPTGAEGRDSSKGEDSAEESDGKPAIVAP) and 505-524 (PSSVFPSDATTEQGPILTKH). Residues 472–481 (EGRDSSKGED) show a composition bias toward basic and acidic residues. Phosphoserine occurs at positions 476, 477, 482, and 486. K489 participates in a covalent cross-link: Glycyl lysine isopeptide (Lys-Gly) (interchain with G-Cter in SUMO2). A DRBM 2 domain is found at 524 to 590 (HGKNPVMELN…ALAALEKLFP (67 aa)). Phosphothreonine is present on T592. Residues 609–898 (RGGPKFAAKP…TEHSMNYQYR (290 aa)) are interaction with PRMT1. 2 disordered regions span residues 631-661 (NEVPPPPNIRGRGRGGNIRGRGRGRGFGGAN) and 719-898 (QGDS…YQYR). Gly residues predominate over residues 644–661 (RGGNIRGRGRGRGFGGAN). 3 stretches are compositionally biased toward low complexity: residues 745 to 769 (SYSSGYQSHQGQQQPYNQSQYSSYG), 783 to 794 (GSYSSYSNSYNS), and 802 to 812 (DYSYDSKFNYS). Phosphoserine is present on residues S794, S812, S814, and S818. Residues 813–822 (GSGGRSGGNS) show a composition bias toward gly residues. Positions 823-834 (YGSSGSSSYNTG) are enriched in low complexity. Over residues 835–845 (SHGGYGTGSGG) the composition is skewed to gly residues. Low complexity predominate over residues 846–886 (SSSYQGKQGGYSSQSNYSSPGSSQSYSGPASSYQSSQGGYS).

Identified in a IGF2BP1-dependent mRNP granule complex containing untranslated mRNAs. Interacts with FUS and SMN. Interacts (via C-terminus) with PRMT1. Forms a complex with ILF2. Can also bind to PRKDC/XRCC7: this may stabilize the interaction of PRKDC/XRCC7 and the heterodimeric complex of XRCC6/KU70 and XRCC5/KU80. Forms a heteromeric complex with ZNF346 and ILF3. Found in a nuclear export complex with XPO5, ILF3, Ran and double-stranded RNA or double-stranded minihelix VA1 RNA. Found in a nuclear export complex with XPO5, RAN, ILF3, ZNF346 and double-stranded RNA. Interacts with XPO5 and ZNF346. Forms a complex with ILF2, YLPM1, KHDRBS1, RBMX, NCOA5 and PPP1CA. Interacts with AGO1 and AGO2. Interacts with DHX36; this interaction occurs in a RNA-dependent manner. Interacts with ELAVL1; this interaction occurs in a RNA-dependent manner. Interacts with HAVCR2; this interaction promotes ILF3 ubiquitination and subsequent degradation. Phosphorylated at Thr-188 and Thr-315 by PKR in response to RNA viruses. This phosphorylation results in the dissociation of ILF2 from the ILF2-ILF3 complex resulting in a cytoplasmic sequestration of ILF3 where it can bind to viral RNAs and impede viral replication. Post-translationally, methylated by protein arginine N-methyltransferase 1. In terms of tissue distribution, ubiquitous. Expressed at high levels in the thymus, testis, ovary and at lower levelss in the spleen.

The protein localises to the nucleus. It is found in the nucleolus. Its subcellular location is the cytoplasm. Its function is as follows. RNA-binding protein that plays an essential role in the biogenesis of circular RNAs (circRNAs) which are produced by back-splicing circularization of pre-mRNAs. Within the nucleus, promotes circRNAs processing by stabilizing the regulatory elements residing in the flanking introns of the circularized exons. Plays thereby a role in the back-splicing of a subset of circRNAs. As a consequence, participates in a wide range of transcriptional and post-transcriptional processes. Binds to poly-U elements and AU-rich elements (AREs) in the 3'-UTR of target mRNAs. Upon viral infection, ILF3 accumulates in the cytoplasm and participates in the innate antiviral response. Mechanistically, ILF3 becomes phosphorylated and activated by the double-stranded RNA-activated protein kinase/PKR which releases ILF3 from cellular mature circRNAs. In turn, unbound ILF3 molecules are able to interact with and thus inhibit viral mRNAs. The chain is Interleukin enhancer-binding factor 3 (Ilf3) from Mus musculus (Mouse).